Here is a 177-residue protein sequence, read N- to C-terminus: Transcription termination/antitermination protein NusG (177 aa).

The region spanning 128–156 (ETVKVIDGPFANFTGSIEEIDYDKSKVKV) is the KOW domain.

This sequence belongs to the NusG family.

In terms of biological role, participates in transcription elongation, termination and antitermination. Stimulates RNA polymerase pausing at U107 and U144 in the trp leader. NusG-stimulated pausing is sequence specific. Does not affect trp leader termination. This chain is Transcription termination/antitermination protein NusG, found in Bacillus subtilis (strain 168).